The primary structure comprises 904 residues: Alanine--tRNA ligase (904 aa).

Positions 600, 604, 704, and 708 each coordinate Zn(2+).

Belongs to the class-II aminoacyl-tRNA synthetase family. The cofactor is Zn(2+).

It is found in the cytoplasm. The enzyme catalyses tRNA(Ala) + L-alanine + ATP = L-alanyl-tRNA(Ala) + AMP + diphosphate. Its function is as follows. Catalyzes the attachment of alanine to tRNA(Ala) in a two-step reaction: alanine is first activated by ATP to form Ala-AMP and then transferred to the acceptor end of tRNA(Ala). Also edits incorrectly charged Ser-tRNA(Ala) and Gly-tRNA(Ala) via its editing domain. The chain is Alanine--tRNA ligase from Metallosphaera sedula (strain ATCC 51363 / DSM 5348 / JCM 9185 / NBRC 15509 / TH2).